Reading from the N-terminus, the 131-residue chain is Profilin (131 aa).

Cys13 and Cys115 are oxidised to a cystine. The short motif at 81-97 (AVIRGKKGSGGVTVKKT) is the Involved in PIP2 interaction element. Thr111 carries the post-translational modification Phosphothreonine.

The protein belongs to the profilin family. Occurs in many kinds of cells as a complex with monomeric actin in a 1:1 ratio.

Its subcellular location is the cytoplasm. It localises to the cytoskeleton. In terms of biological role, binds to actin and affects the structure of the cytoskeleton. At high concentrations, profilin prevents the polymerization of actin, whereas it enhances it at low concentrations. This Phoenix dactylifera (Date palm) protein is Profilin.